Reading from the N-terminus, the 570-residue chain is Set1/Ash2 histone methyltransferase complex subunit ash-2 (570 aa).

A PHD-type zinc finger spans residues 19-76 (TTVCYCDGKRELGSVEVVCSTCLKWFHGRCLKEFHELNSNGVPFMICYTFTCKQCRPT). The segment at 201–242 (NREPRHIELPPIEGPKTRGASKRRHAEAPVTGKKQKLAADYS) is disordered. The 199-residue stretch at 270–468 (PNVPEDPAWN…TLVEMPGSYI (199 aa)) folds into the B30.2/SPRY domain.

As to quaternary structure, component of the SET2 complex (also known as the SET1/COMPASS complex), which contains at least set-2, swd-2.1, cfp-1, rbbp-5, wdr-5.1, dpy-30 and ash-2. Within the complex, interacts with cfp-1 and wdr-5.1. Expressed in somatic and germline tissues (at protein level).

It localises to the nucleus. Functionally, component of the set-2/ash-2 histone methyltransferase (HMT) complex. Required for the di- and trimethylation at 'Lys-4' of histone H3, a mark associated with epigenetic transcriptional activation. Implicated in the epigenetic inheritance of lifespan over several generations. Functions as a transcriptional regulator. Acts in the germline to limit the longevity of the soma, probably by regulating a lipid metabolism pathway that signals from the germline to the intestine, thereby preventing accumulation of mono-unsaturated fatty acids. In Caenorhabditis elegans, this protein is Set1/Ash2 histone methyltransferase complex subunit ash-2.